A 546-amino-acid chain; its full sequence is Chaperonin GroEL 2 (546 aa).

ATP contacts are provided by residues 30-33 (TLGP), Lys-51, 87-91 (DGTTT), Gly-415, and Asp-495.

It belongs to the chaperonin (HSP60) family. As to quaternary structure, forms a cylinder of 14 subunits composed of two heptameric rings stacked back-to-back. Interacts with the co-chaperonin GroES.

Its subcellular location is the cytoplasm. The catalysed reaction is ATP + H2O + a folded polypeptide = ADP + phosphate + an unfolded polypeptide.. In terms of biological role, together with its co-chaperonin GroES, plays an essential role in assisting protein folding. The GroEL-GroES system forms a nano-cage that allows encapsulation of the non-native substrate proteins and provides a physical environment optimized to promote and accelerate protein folding. This is Chaperonin GroEL 2 from Burkholderia cenocepacia (strain HI2424).